Here is a 503-residue protein sequence, read N- to C-terminus: Cytochrome P450 71B6 (503 aa).

A helical transmembrane segment spans residues 10–30; that stretch reads TELLPWLLLLLIPPLLIFFLL. C446 contacts heme.

The protein belongs to the cytochrome P450 family. It depends on heme as a cofactor.

Its subcellular location is the membrane. This Arabidopsis thaliana (Mouse-ear cress) protein is Cytochrome P450 71B6 (CYP71B6).